Here is a 311-residue protein sequence, read N- to C-terminus: D-allose-binding periplasmic protein (311 aa).

The N-terminal stretch at 1–23 is a signal peptide; sequence MNKYLKYFSGTLVGLMLSTSAFA.

Belongs to the bacterial solute-binding protein 2 family.

It localises to the periplasm. In terms of biological role, part of the binding-protein-dependent transport system AlsBAC for D-allose. The polypeptide is D-allose-binding periplasmic protein (alsB) (Escherichia coli (strain K12)).